Consider the following 357-residue polypeptide: Mating-type protein MAT-1 (357 aa).

The segment at residues R53–R108 is a DNA-binding region (alpha box).

This sequence belongs to the MATALPHA1 family.

Its subcellular location is the nucleus. Its function is as follows. Mating type proteins are sequence specific DNA-binding proteins that act as master switches in fungal differentiation by controlling gene expression in a cell type-specific fashion. Transcriptional activator that induces the transcription of alpha-specific genes. The sequence is that of Mating-type protein MAT-1 (MAT1) from Fusarium oxysporum (Fusarium vascular wilt).